A 124-amino-acid polypeptide reads, in one-letter code: Translation initiation factor 5A (124 aa).

Residues 27-53 are disordered; it reads TSYSTSKPGKHGSAKARVEGTGVFDGQ. A Hypusine modification is found at K36.

Belongs to the eIF-5A family.

It localises to the cytoplasm. Functions by promoting the formation of the first peptide bond. This Natronomonas pharaonis (strain ATCC 35678 / DSM 2160 / CIP 103997 / JCM 8858 / NBRC 14720 / NCIMB 2260 / Gabara) (Halobacterium pharaonis) protein is Translation initiation factor 5A.